A 344-amino-acid chain; its full sequence is L-rhamnose-proton symporter (344 aa).

A run of 10 helical transmembrane segments spans residues 4–24 (AITM…CFYA), 38–58 (WSVG…ALLL), 68–88 (FSLS…IGNI), 101–121 (MGIG…TPII), 137–157 (TLLG…AGQL), 175–195 (LVLA…MNAA), 214–234 (LPSY…FCFI), 259–279 (VLLS…YAWG), 290–310 (ISWM…GLVL), and 323–343 (VLSL…IGMA).

This sequence belongs to the L-rhamnose transporter (TC 2.A.7.6) family.

Its subcellular location is the cell inner membrane. The catalysed reaction is L-rhamnopyranose(in) + H(+)(in) = L-rhamnopyranose(out) + H(+)(out). Functionally, uptake of L-rhamnose across the cytoplasmic membrane with the concomitant transport of protons into the cell (symport system). This chain is L-rhamnose-proton symporter, found in Escherichia coli O9:H4 (strain HS).